A 290-amino-acid chain; its full sequence is 4-hydroxy-3-methylbut-2-enyl diphosphate reductase (290 aa).

C13 lines the [4Fe-4S] cluster pocket. (2E)-4-hydroxy-3-methylbut-2-enyl diphosphate-binding residues include H41 and H75. Residues H41 and H75 each contribute to the dimethylallyl diphosphate site. 2 residues coordinate isopentenyl diphosphate: H41 and H75. C97 lines the [4Fe-4S] cluster pocket. H129 contacts (2E)-4-hydroxy-3-methylbut-2-enyl diphosphate. Residue H129 coordinates dimethylallyl diphosphate. H129 lines the isopentenyl diphosphate pocket. E131 serves as the catalytic Proton donor. T167 contacts (2E)-4-hydroxy-3-methylbut-2-enyl diphosphate. Position 198 (C198) interacts with [4Fe-4S] cluster. 4 residues coordinate (2E)-4-hydroxy-3-methylbut-2-enyl diphosphate: S226, S227, N228, and S270. Residues S226, S227, N228, and S270 each coordinate dimethylallyl diphosphate. Isopentenyl diphosphate-binding residues include S226, S227, N228, and S270.

It belongs to the IspH family. It depends on [4Fe-4S] cluster as a cofactor.

It carries out the reaction isopentenyl diphosphate + 2 oxidized [2Fe-2S]-[ferredoxin] + H2O = (2E)-4-hydroxy-3-methylbut-2-enyl diphosphate + 2 reduced [2Fe-2S]-[ferredoxin] + 2 H(+). The enzyme catalyses dimethylallyl diphosphate + 2 oxidized [2Fe-2S]-[ferredoxin] + H2O = (2E)-4-hydroxy-3-methylbut-2-enyl diphosphate + 2 reduced [2Fe-2S]-[ferredoxin] + 2 H(+). Its pathway is isoprenoid biosynthesis; dimethylallyl diphosphate biosynthesis; dimethylallyl diphosphate from (2E)-4-hydroxy-3-methylbutenyl diphosphate: step 1/1. It participates in isoprenoid biosynthesis; isopentenyl diphosphate biosynthesis via DXP pathway; isopentenyl diphosphate from 1-deoxy-D-xylulose 5-phosphate: step 6/6. In terms of biological role, catalyzes the conversion of 1-hydroxy-2-methyl-2-(E)-butenyl 4-diphosphate (HMBPP) into a mixture of isopentenyl diphosphate (IPP) and dimethylallyl diphosphate (DMAPP). Acts in the terminal step of the DOXP/MEP pathway for isoprenoid precursor biosynthesis. The protein is 4-hydroxy-3-methylbut-2-enyl diphosphate reductase of Parabacteroides distasonis (strain ATCC 8503 / DSM 20701 / CIP 104284 / JCM 5825 / NCTC 11152).